A 345-amino-acid chain; its full sequence is Protein RecA (345 aa).

65-72 contacts ATP; the sequence is GPESSGKT.

The protein belongs to the RecA family.

The protein localises to the cytoplasm. Its function is as follows. Can catalyze the hydrolysis of ATP in the presence of single-stranded DNA, the ATP-dependent uptake of single-stranded DNA by duplex DNA, and the ATP-dependent hybridization of homologous single-stranded DNAs. It interacts with LexA causing its activation and leading to its autocatalytic cleavage. The polypeptide is Protein RecA (Hahella chejuensis (strain KCTC 2396)).